Reading from the N-terminus, the 341-residue chain is Dual oxidase maturation factor 1 (341 aa).

The Extracellular segment spans residues Met-1–Leu-24. Residues Ala-25 to Ile-45 form a helical membrane-spanning segment. The Cytoplasmic segment spans residues Arg-46–Leu-51. A helical transmembrane segment spans residues Phe-52 to Phe-72. The Extracellular portion of the chain corresponds to Ser-73–Met-183. 3 N-linked (GlcNAc...) asparagine glycosylation sites follow: Asn-84, Asn-109, and Asn-121. The chain crosses the membrane as a helical span at residues Leu-184–Val-204. Residue Tyr-205 is a topological domain, cytoplasmic. Residues Gly-206–Met-226 form a helical membrane-spanning segment. The Extracellular portion of the chain corresponds to Thr-227 to Pro-249. The helical transmembrane segment at Ala-250–Val-270 threads the bilayer. The Cytoplasmic segment spans residues Ala-271–Leu-341.

It belongs to the DUOXA family. In terms of assembly, may interact with NUMB.

Its subcellular location is the membrane. May be required for the maturation and the transport from the endoplasmic reticulum to the plasma membrane of functional DUOX1. This chain is Dual oxidase maturation factor 1 (Duoxa1), found in Mus musculus (Mouse).